The following is a 647-amino-acid chain: DNA mismatch repair protein MutL (647 aa).

This sequence belongs to the DNA mismatch repair MutL/HexB family.

Its function is as follows. This protein is involved in the repair of mismatches in DNA. It is required for dam-dependent methyl-directed DNA mismatch repair. May act as a 'molecular matchmaker', a protein that promotes the formation of a stable complex between two or more DNA-binding proteins in an ATP-dependent manner without itself being part of a final effector complex. This Bacillus thuringiensis (strain Al Hakam) protein is DNA mismatch repair protein MutL.